The sequence spans 1681 residues: Y' element ATP-dependent helicase protein 1 copy 2 (1681 aa).

The 178-residue stretch at 683-860 (EIYMADTPSV…LQRIGLTGLA (178 aa)) folds into the Helicase ATP-binding domain. 696–703 (APPGYGKT) lines the ATP pocket. The 150-residue stretch at 917–1066 (KLLLALFEIE…EFYGLESKKG (150 aa)) folds into the Helicase C-terminal domain. The span at 1140–1283 (ANASTNATTN…ATTTESTNAS (144 aa)) shows a compositional bias: low complexity. The segment at 1140–1307 (ANASTNATTN…RFHPVTDINK (168 aa)) is disordered. A compositionally biased stretch (basic and acidic residues) spans 1284–1307 (AKEDANKDGNAEDNRFHPVTDINK).

It belongs to the helicase family. Yeast subtelomeric Y' repeat subfamily.

In terms of biological role, catalyzes DNA unwinding and is involved in telomerase-independent telomere maintenance. This chain is Y' element ATP-dependent helicase protein 1 copy 2 (YRF1-2), found in Saccharomyces cerevisiae (strain ATCC 204508 / S288c) (Baker's yeast).